A 794-amino-acid polypeptide reads, in one-letter code: MELRPWLLWVVAATGTLVLLAADAQGQKVFTNTWAVRIPGGPAVANSVARKHGFLNLGQIFGDYYHFWHRGVTKRSLSPHRPRHSRLQREPQVQWLEQQVAKRRTKRDVYQEPTDPKFPQQWYLSGVTQRDLNVKAAWAQGYTGHGIVVSILDDGIEKNHPDLAGNYDPGASFDVNDQDPDPQPRYTQMNDNRHGTRCAGEVAAVANNGVCGVGVAYNARIGGVRMLDGEVTDAVEARSLGLNPNHIHIYSASWGPEDDGKTVDGPARLAEEAFFRGVSQGRGGLGSIFVWASGNGGREHDSCNCDGYTNSIYTLSISSATQFGNVPWYSEACSSTLATTYSSGNQNEKQIVTTDLRQKCTESHTGTSASAPLAAGIIALTLEANKNLTWRDMQHLVVQTSKPAHLNANDWATNGVGRKVSHSYGYGLLDAGAMVALAQNWTTVAPQRKCIIDILTEPKDIGKRLEVRKTVTACLGEPNHITRLEHAQARLTLSYNRRGDLAIHLVSPMGTRSTLLAARPHDYSADGFNDWAFMTTHSWDEDPSGEWVLEIENTSEANNYGTLTKFTLVLYGTAPEGLPVPPESSGCKTLTSSQACVVCEEGFSLHQKSCVQHCPPGFAPQVLDTHYSTENDVETIRASVCAPCHASCATCQGPALTDCLSCPSHASLDPVEQTCSRQSQSSRESPPQQQPPRLPPEVEAGQRLRAGLLPSHLPEVVAGLSCAFIVLVFVTVFLVLQLRSGFSFRGVKVYTMDRGLISYKGLPPEAWQEECPSDSEEDEGRGERTAFIKDQSAL.

Positions 1–26 are cleaved as a signal peptide; the sequence is MELRPWLLWVVAATGTLVLLAADAQG. The propeptide at 27 to 107 is inhibition peptide; the sequence is QKVFTNTWAV…QQVAKRRTKR (81 aa). Topologically, residues 108–715 are lumenal; the sequence is DVYQEPTDPK…AGLLPSHLPE (608 aa). Aspartate 115 contacts Ca(2+). One can recognise a Peptidase S8 domain in the interval 121–435; the sequence is QWYLSGVTQR…YGLLDAGAMV (315 aa). The active-site Charge relay system is aspartate 153. Aspartate 154 is a binding site for substrate. Aspartate 162, aspartate 174, aspartate 179, and aspartate 181 together coordinate Ca(2+). Residues 162–183 are disordered; that stretch reads DLAGNYDPGASFDVNDQDPDPQ. 191 to 192 contacts substrate; sequence DN. The Charge relay system role is filled by histidine 194. Positions 205, 208, 210, and 212 each coordinate Ca(2+). 2 cysteine pairs are disulfide-bonded: cysteine 211–cysteine 360 and cysteine 303–cysteine 333. Residues glutamate 236, 253–258, aspartate 264, and 292–295 each bind substrate; these read SWGPED and ASGN. Residue aspartate 258 coordinates Ca(2+). Aspartate 301 provides a ligand contact to Ca(2+). Residues aspartate 306 and tyrosine 308 each contribute to the substrate site. Residue glutamate 331 participates in Ca(2+) binding. Catalysis depends on serine 368, which acts as the Charge relay system. Substrate is bound at residue serine 368. Asparagine 387 and asparagine 440 each carry an N-linked (GlcNAc...) asparagine glycan. Residues 444-576 enclose the P/Homo B domain; that stretch reads VAPQRKCIID…TLVLYGTAPE (133 aa). A disulfide bridge links cysteine 450 with cysteine 474. The Cell attachment site signature appears at 498–500; the sequence is RGD. Asparagine 553 carries an N-linked (GlcNAc...) asparagine glycan. FU repeat units follow at residues 577-620 and 638-681; these read GLPV…GFAP and ASVC…QSQS. Residues 673–696 are disordered; sequence QTCSRQSQSSRESPPQQQPPRLPP. Residues 676–687 are compositionally biased toward low complexity; that stretch reads SRQSQSSRESPP. Residues 716–738 traverse the membrane as a helical segment; sequence VVAGLSCAFIVLVFVTVFLVLQL. The Cytoplasmic portion of the chain corresponds to 739–794; that stretch reads RSGFSFRGVKVYTMDRGLISYKGLPPEAWQEECPSDSEEDEGRGERTAFIKDQSAL. Residues 759-762 form a cell surface signal region; the sequence is YKGL. The segment covering 767-780 has biased composition (acidic residues); it reads WQEECPSDSEEDEG. Residues 767 to 794 form a disordered region; that stretch reads WQEECPSDSEEDEGRGERTAFIKDQSAL. A phosphoserine; by CK2 mark is found at serine 773 and serine 775. The Trans Golgi network signal motif lies at 773 to 779; that stretch reads SDSEEDE.

Belongs to the peptidase S8 family. Furin subfamily. In terms of assembly, interacts with FLNA. Binds to PACS1 which mediates TGN localization and connection to clathrin adapters. Interacts with LAMP1, LAMP2 and LAMP3. Requires Ca(2+) as cofactor. Post-translationally, the inhibition peptide, which plays the role of an intramolecular chaperone, is autocatalytically removed in the endoplasmic reticulum (ER) and remains non-covalently bound to furin as a potent autoinhibitor. Following transport to the trans Golgi, a second cleavage within the inhibition propeptide results in propeptide dissociation and furin activation. In terms of processing, phosphorylation is required for TGN localization of the endoprotease. In vivo, exists as di-, mono- and non-phosphorylated forms. In terms of tissue distribution, seems to be expressed ubiquitously.

The protein localises to the golgi apparatus. It localises to the trans-Golgi network membrane. The protein resides in the cell membrane. Its subcellular location is the secreted. It is found in the endosome membrane. It carries out the reaction Release of mature proteins from their proproteins by cleavage of -Arg-Xaa-Yaa-Arg-|-Zaa- bonds, where Xaa can be any amino acid and Yaa is Arg or Lys. Releases albumin, complement component C3 and von Willebrand factor from their respective precursors.. With respect to regulation, inhibited by the not secondly cleaved propeptide. Inhibited by m-guanidinomethyl-phenylacetyl-Arg-Val-Arg-(amidomethyl)-benzamidine (m-guanidinomethyl-Phac-RVR-Amb) and 4-guanidinomethyl-phenylacetyl-Arg-Tle-Arg-4-amidinobenzylamide (MI-1148). Inhibited by Decanoyl-Arg-Val-Lys-Arg-chloromethylketone (decanoyl-RVKR-CMK). Inhibited by heparin/heparan sulfate-binding. Functionally, ubiquitous endoprotease within constitutive secretory pathways capable of cleavage at the RX(K/R)R consensus motif. Mediates processing of TGFB1, an essential step in TGF-beta-1 activation. Converts through proteolytic cleavage the non-functional Brain natriuretic factor prohormone into its active hormone BNP(1-32). By mediating processing of accessory subunit ATP6AP1/Ac45 of the V-ATPase, regulates the acidification of dense-core secretory granules in islets of Langerhans cells. In terms of biological role, (Microbial infection) Cleaves and activates diphtheria toxin DT. (Microbial infection) Cleaves and activates anthrax toxin protective antigen (PA). Its function is as follows. (Microbial infection) Cleaves and activates HIV-1 virus Envelope glycoprotein gp160. Functionally, (Microbial infection) Required for H7N1 and H5N1 influenza virus infection probably by cleaving hemagglutinin. In terms of biological role, (Microbial infection) Able to cleave S.pneumoniae serine-rich repeat protein PsrP. (Microbial infection) Facilitates human coronaviruses EMC and SARS-CoV-2 infections by proteolytically cleaving the spike protein at the monobasic S1/S2 cleavage site. This cleavage is essential for spike protein-mediated cell-cell fusion and entry into human lung cells. Its function is as follows. (Microbial infection) Facilitates mumps virus infection by proteolytically cleaving the viral fusion protein F. The chain is Furin from Homo sapiens (Human).